We begin with the raw amino-acid sequence, 1270 residues long: DNA-directed RNA polymerase subunit beta (1270 aa).

The protein belongs to the RNA polymerase beta chain family. The RNAP catalytic core consists of 2 alpha, 1 beta, 1 beta' and 1 omega subunit. When a sigma factor is associated with the core the holoenzyme is formed, which can initiate transcription.

The catalysed reaction is RNA(n) + a ribonucleoside 5'-triphosphate = RNA(n+1) + diphosphate. In terms of biological role, DNA-dependent RNA polymerase catalyzes the transcription of DNA into RNA using the four ribonucleoside triphosphates as substrates. In Porphyromonas cangingivalis, this protein is DNA-directed RNA polymerase subunit beta.